The chain runs to 100 residues: NAD(P)H-quinone oxidoreductase subunit 4L, chloroplastic (100 aa).

The next 3 helical transmembrane spans lie at 1–21 (MLEH…FGLI), 29–49 (ALMC…TFSN), and 60–80 (IFAI…LAIV).

Belongs to the complex I subunit 4L family. In terms of assembly, NDH is composed of at least 16 different subunits, 5 of which are encoded in the nucleus.

The protein resides in the plastid. It is found in the chloroplast thylakoid membrane. It catalyses the reaction a plastoquinone + NADH + (n+1) H(+)(in) = a plastoquinol + NAD(+) + n H(+)(out). The catalysed reaction is a plastoquinone + NADPH + (n+1) H(+)(in) = a plastoquinol + NADP(+) + n H(+)(out). NDH shuttles electrons from NAD(P)H:plastoquinone, via FMN and iron-sulfur (Fe-S) centers, to quinones in the photosynthetic chain and possibly in a chloroplast respiratory chain. The immediate electron acceptor for the enzyme in this species is believed to be plastoquinone. Couples the redox reaction to proton translocation, and thus conserves the redox energy in a proton gradient. This chain is NAD(P)H-quinone oxidoreductase subunit 4L, chloroplastic, found in Physcomitrium patens (Spreading-leaved earth moss).